A 500-amino-acid chain; its full sequence is Cytochrome P450 71B38 (500 aa).

Residues 3–23 form a helical membrane-spanning segment; sequence IFLCFLLLLPLSLILFKKLLP. Cys441 serves as a coordination point for heme.

It belongs to the cytochrome P450 family. The cofactor is heme.

The protein resides in the membrane. The sequence is that of Cytochrome P450 71B38 (CYP71B38) from Arabidopsis thaliana (Mouse-ear cress).